The sequence spans 194 residues: Holliday junction branch migration complex subunit RuvA (194 aa).

The domain I stretch occupies residues 1 to 64 (MISRLTGKLV…EDAHLLFGFA (64 aa)). The domain II stretch occupies residues 65–143 (TAEERKTFRQ…AHTVTDGLFA (79 aa)). The flexible linker stretch occupies residues 144–147 (AAPA). A domain III region spans residues 147–194 (AADETEDIVSTLLALGYSEREAKAAVKGVPEGTDVGEGVRLALKNLLK).

The protein belongs to the RuvA family. Homotetramer. Forms an RuvA(8)-RuvB(12)-Holliday junction (HJ) complex. HJ DNA is sandwiched between 2 RuvA tetramers; dsDNA enters through RuvA and exits via RuvB. An RuvB hexamer assembles on each DNA strand where it exits the tetramer. Each RuvB hexamer is contacted by two RuvA subunits (via domain III) on 2 adjacent RuvB subunits; this complex drives branch migration. In the full resolvosome a probable DNA-RuvA(4)-RuvB(12)-RuvC(2) complex forms which resolves the HJ.

The protein resides in the cytoplasm. In terms of biological role, the RuvA-RuvB-RuvC complex processes Holliday junction (HJ) DNA during genetic recombination and DNA repair, while the RuvA-RuvB complex plays an important role in the rescue of blocked DNA replication forks via replication fork reversal (RFR). RuvA specifically binds to HJ cruciform DNA, conferring on it an open structure. The RuvB hexamer acts as an ATP-dependent pump, pulling dsDNA into and through the RuvAB complex. HJ branch migration allows RuvC to scan DNA until it finds its consensus sequence, where it cleaves and resolves the cruciform DNA. The protein is Holliday junction branch migration complex subunit RuvA of Neisseria meningitidis serogroup B (strain ATCC BAA-335 / MC58).